Reading from the N-terminus, the 155-residue chain is Small ribosomal subunit protein uS7c (155 aa).

It belongs to the universal ribosomal protein uS7 family. Part of the 30S ribosomal subunit.

The protein localises to the plastid. The protein resides in the chloroplast. One of the primary rRNA binding proteins, it binds directly to 16S rRNA where it nucleates assembly of the head domain of the 30S subunit. The chain is Small ribosomal subunit protein uS7c (rps7) from Lilium superbum (Turk's cap lily).